The chain runs to 181 residues: Ribonuclease HII (181 aa).

The RNase H type-2 domain maps to 1–181 (MICGIDEVGR…SLHRKSFQLI (181 aa)). Residues Asp6, Glu7, and Asp98 each coordinate a divalent metal cation.

The protein belongs to the RNase HII family. Mn(2+) serves as cofactor. Requires Mg(2+) as cofactor.

It is found in the cytoplasm. The catalysed reaction is Endonucleolytic cleavage to 5'-phosphomonoester.. Its function is as follows. Endonuclease that specifically degrades the RNA of RNA-DNA hybrids. The chain is Ribonuclease HII from Borrelia duttonii (strain Ly).